The primary structure comprises 498 residues: DNA primase (498 aa).

Residues 35 to 59 (CPFHPDDTPSFYVSPSKQIFKCFGC) form a CHC2-type zinc finger. A Toprim domain is found at 243–324 (GFAILVEGYF…EVYPVYLPEG (82 aa)). Mg(2+) is bound by residues E249, D293, and D295.

This sequence belongs to the DnaG primase family. Monomer. Interacts with DnaB. It depends on Zn(2+) as a cofactor. Mg(2+) serves as cofactor.

It catalyses the reaction ssDNA + n NTP = ssDNA/pppN(pN)n-1 hybrid + (n-1) diphosphate.. RNA polymerase that catalyzes the synthesis of short RNA molecules used as primers for DNA polymerase during DNA replication. This is DNA primase from Aquifex aeolicus (strain VF5).